The sequence spans 34 residues: MEVNILAFIATALFILVPTAFLLIIYVKTVSQNN.

Residues 5–25 form a helical membrane-spanning segment; that stretch reads ILAFIATALFILVPTAFLLII.

The protein belongs to the PsbM family. As to quaternary structure, PSII is composed of 1 copy each of membrane proteins PsbA, PsbB, PsbC, PsbD, PsbE, PsbF, PsbH, PsbI, PsbJ, PsbK, PsbL, PsbM, PsbT, PsbX, PsbY, PsbZ, Psb30/Ycf12, at least 3 peripheral proteins of the oxygen-evolving complex and a large number of cofactors. It forms dimeric complexes.

The protein resides in the plastid. It is found in the chloroplast thylakoid membrane. Its function is as follows. One of the components of the core complex of photosystem II (PSII). PSII is a light-driven water:plastoquinone oxidoreductase that uses light energy to abstract electrons from H(2)O, generating O(2) and a proton gradient subsequently used for ATP formation. It consists of a core antenna complex that captures photons, and an electron transfer chain that converts photonic excitation into a charge separation. This subunit is found at the monomer-monomer interface. In Coffea arabica (Arabian coffee), this protein is Photosystem II reaction center protein M.